The chain runs to 71 residues: Mitochondrial import protein 1 (71 aa).

A helical transmembrane segment spans residues 22–44 (YAAINLGLPFLNGVMLGFGEIFA).

Belongs to the MIM1 family. In terms of assembly, component of the mitochondrial outer import machinery (MIM) complex containing at least mim1 and mim2. Interacts with mim2. Interacts with mitophagy receptor atg43.

It localises to the mitochondrion outer membrane. In terms of biological role, component of the mitochondrial outer import machinery (MIM) complex that mediates transport of proteins into mitochondrial compartments. Promotes the insertion of tom70 into the outer mitochondrial membrane. Promotes the insertion of atg43 into the outer mitochondrial membrane. The MIM complex cooperates with the receptor tom70 in binding of precursor proteins and promotes their insertion and assembly into the outer membrane. Involved in import of the subset of proteins with multiple alpha-helical transmembrane segments. Required for the assembly of the TOM (translocase of outer membrane) receptor complex, which is responsible for the recognition and translocation of cytosolically synthesized mitochondrial preproteins. The protein is Mitochondrial import protein 1 of Schizosaccharomyces pombe (strain 972 / ATCC 24843) (Fission yeast).